We begin with the raw amino-acid sequence, 100 residues long: Small ribosomal subunit protein uS14 (100 aa).

The protein belongs to the universal ribosomal protein uS14 family. Part of the 30S ribosomal subunit. Contacts proteins S3 and S10.

Binds 16S rRNA, required for the assembly of 30S particles and may also be responsible for determining the conformation of the 16S rRNA at the A site. The sequence is that of Small ribosomal subunit protein uS14 from Prochlorococcus marinus (strain MIT 9211).